A 301-amino-acid polypeptide reads, in one-letter code: GTPase Era (301 aa).

The Era-type G domain occupies 4–173 (KAGFVALIGK…LECISEHLSP (170 aa)). Positions 12–19 (GKPNAGKS) are G1. GTP is bound at residue 12 to 19 (GKPNAGKS). Residues 38 to 42 (NATRK) are G2. The tract at residues 64 to 67 (DTPG) is G3. GTP is bound by residues 64 to 68 (DTPGL) and 122 to 125 (SKID). The G4 stretch occupies residues 122-125 (SKID). The interval 152–154 (LSA) is G5. Residues 204–280 (LSDEIPYESD…FLNLQVIAQK (77 aa)) enclose the KH type-2 domain.

Belongs to the TRAFAC class TrmE-Era-EngA-EngB-Septin-like GTPase superfamily. Era GTPase family. Monomer.

Its subcellular location is the cytoplasm. It localises to the cell inner membrane. Functionally, an essential GTPase that binds both GDP and GTP, with rapid nucleotide exchange. Plays a role in 16S rRNA processing and 30S ribosomal subunit biogenesis and possibly also in cell cycle regulation and energy metabolism. The protein is GTPase Era of Helicobacter acinonychis (strain Sheeba).